Here is a 263-residue protein sequence, read N- to C-terminus: 3-methyl-2-oxobutanoate hydroxymethyltransferase (263 aa).

Mg(2+) contacts are provided by D45 and D84. 3-methyl-2-oxobutanoate is bound by residues 45–46, D84, and K112; that span reads DS. Residue E114 coordinates Mg(2+). E180 serves as the catalytic Proton acceptor.

The protein belongs to the PanB family. As to quaternary structure, homodecamer; pentamer of dimers. Requires Mg(2+) as cofactor.

It is found in the cytoplasm. It catalyses the reaction 3-methyl-2-oxobutanoate + (6R)-5,10-methylene-5,6,7,8-tetrahydrofolate + H2O = 2-dehydropantoate + (6S)-5,6,7,8-tetrahydrofolate. It participates in cofactor biosynthesis; (R)-pantothenate biosynthesis; (R)-pantoate from 3-methyl-2-oxobutanoate: step 1/2. In terms of biological role, catalyzes the reversible reaction in which hydroxymethyl group from 5,10-methylenetetrahydrofolate is transferred onto alpha-ketoisovalerate to form ketopantoate. The chain is 3-methyl-2-oxobutanoate hydroxymethyltransferase from Salmonella agona (strain SL483).